Here is a 475-residue protein sequence, read N- to C-terminus: Ataxin-10 (475 aa).

R10 carries the omega-N-methylarginine modification. Residues S12 and S77 each carry the phosphoserine modification. Position 82 is a phosphothreonine (T82). S430 carries the post-translational modification Phosphoserine.

Belongs to the ataxin-10 family. As to quaternary structure, homooligomer. Interacts with GNB2. Interacts with IQCB1. Interacts with OGT. In terms of processing, polyubiquitinated. Phosphorylation at Ser-12 by AURKB promotes the association of ATXN10 with PLK1. Phosphorylation at Ser-77 and Thr-82 by PLK1 may play a role in the regulation of cytokinesis and may stimulate the proteasome-mediated degradation of ATXN10.

Its subcellular location is the cytoplasm. It is found in the perinuclear region. It localises to the midbody. The protein resides in the cytoskeleton. The protein localises to the cilium basal body. Its subcellular location is the microtubule organizing center. It is found in the centrosome. It localises to the centriole. Functionally, may play a role in the regulation of cytokinesis. May play a role in signaling by stimulating protein glycosylation. Induces neuritogenesis by activating the Ras-MAP kinase pathway and is necessary for the survival of cerebellar neurons. Does not appear to play a major role in ciliogenesis. The polypeptide is Ataxin-10 (ATXN10) (Macaca fascicularis (Crab-eating macaque)).